Reading from the N-terminus, the 384-residue chain is Lipid-A-disaccharide synthase 1 (384 aa).

The protein belongs to the LpxB family.

The enzyme catalyses a lipid X + a UDP-2-N,3-O-bis[(3R)-3-hydroxyacyl]-alpha-D-glucosamine = a lipid A disaccharide + UDP + H(+). It participates in bacterial outer membrane biogenesis; LPS lipid A biosynthesis. Condensation of UDP-2,3-diacylglucosamine and 2,3-diacylglucosamine-1-phosphate to form lipid A disaccharide, a precursor of lipid A, a phosphorylated glycolipid that anchors the lipopolysaccharide to the outer membrane of the cell. This is Lipid-A-disaccharide synthase 1 from Legionella pneumophila (strain Lens).